The sequence spans 83 residues: Disintegrin isoform D-3 (83 aa).

Residues proline 2–histidine 83 enclose the Disintegrin domain. 7 disulfide bridges follow: cysteine 5–cysteine 24, cysteine 16–cysteine 34, cysteine 18–cysteine 29, cysteine 28–cysteine 51, cysteine 42–cysteine 48, cysteine 47–cysteine 72, and cysteine 60–cysteine 79. The short motif at arginine 64–aspartate 66 is the Cell attachment site element.

It belongs to the venom metalloproteinase (M12B) family. P-II subfamily. P-IIa sub-subfamily. In terms of assembly, monomer (disintegrin). Expressed by the venom gland.

The protein localises to the secreted. Inhibits fibrinogen interaction with platelets. Acts by binding to alpha-IIb/beta-3 (ITGA2B/ITGB3) on the platelet surface and inhibits aggregation induced by ADP, thrombin, platelet-activating factor and collagen. This is Disintegrin isoform D-3 from Bitis arietans (African puff adder).